Reading from the N-terminus, the 124-residue chain is NADPH-dependent 7-cyano-7-deazaguanine reductase (124 aa).

The active-site Thioimide intermediate is C40. Catalysis depends on D47, which acts as the Proton donor. Residues 62-64 and 81-82 contribute to the substrate site; these read VEL and HE.

Belongs to the GTP cyclohydrolase I family. QueF type 1 subfamily.

It localises to the cytoplasm. It catalyses the reaction 7-aminomethyl-7-carbaguanine + 2 NADP(+) = 7-cyano-7-deazaguanine + 2 NADPH + 3 H(+). The protein operates within tRNA modification; tRNA-queuosine biosynthesis. In terms of biological role, catalyzes the NADPH-dependent reduction of 7-cyano-7-deazaguanine (preQ0) to 7-aminomethyl-7-deazaguanine (preQ1). The polypeptide is NADPH-dependent 7-cyano-7-deazaguanine reductase (Wolinella succinogenes (strain ATCC 29543 / DSM 1740 / CCUG 13145 / JCM 31913 / LMG 7466 / NCTC 11488 / FDC 602W) (Vibrio succinogenes)).